A 267-amino-acid polypeptide reads, in one-letter code: MAPHGDGLSDIEEPEVDAQSEILRPISSVVFVIAMQAEALPLVNKFGLSETTDSPLGKGLPWVLYHGVHKDLRINVVCPGRDAALGIDSVGTVPASLITFASIQALKPDIIINAGTCGGFKVKGANIGDVFLVSDVVFHDRRIPIPMFDLYGVGLRQAFSTPNLLKELNLKIGRLSTGDSLDMSTQDETLIIANDATLKDMEGAAVAYVADLLKIPVVFLKAVTDLVDGDKPTAEEFLQNLTVVTAALEGTATKVINFINGRNLSDL.

Catalysis depends on Glu-38, which acts as the Proton acceptor. S-methyl-5'-thioadenosine is bound by residues Thr-116, 199-202 (KDME), and Asp-225. Adenine-binding residues include Lys-199 and Asp-225. Residue Asp-225 is the Proton donor of the active site.

This sequence belongs to the PNP/UDP phosphorylase family. MtnN subfamily. In terms of assembly, homodimer. Interacts with CBL3 in a calcium-dependent manner. As to expression, expressed in roots, leaves, stems, cauline leaves and flowers.

It catalyses the reaction S-methyl-5'-thioadenosine + H2O = 5-(methylsulfanyl)-D-ribose + adenine. The protein operates within amino-acid biosynthesis; L-methionine biosynthesis via salvage pathway; S-methyl-5-thio-alpha-D-ribose 1-phosphate from S-methyl-5'-thioadenosine (hydrolase route): step 1/2. Inhibited by CBL3 in a calcium-dependent manner. Inhibited by 5'-methylthiotubercidin (MTT) and by formycin A (FMA). Functionally, enzyme of the methionine cycle that catalyzes the irreversible cleavage of the glycosidic bond in 5'-methylthioadenosine (MTA) to adenine and 5'-methylthioribose. Contributes to the maintenance of AdoMet homeostasis and is required to sustain high rates of ethylene synthesis. Inactive towards S-adenosylhomocysteine (SAH/AdoHcy). The chain is 5'-methylthioadenosine nucleosidase (MTN1) from Arabidopsis thaliana (Mouse-ear cress).